Reading from the N-terminus, the 598-residue chain is Peroxisomal targeting signal receptor (598 aa).

Disordered stretches follow at residues 1-54, 135-154, and 208-237; these read MSFM…GEMS, RGGS…MQGG, and AVGK…TTTE. The segment covering 9–22 has biased composition (polar residues); it reads ECSTGRNPLSQFTK. C10 participates in a covalent cross-link: Glycyl cysteine thioester (Cys-Gly) (interchain with G-Cter in ubiquitin). K22 participates in a covalent cross-link: Glycyl lysine isopeptide (Lys-Gly) (interchain with G-Cter in ubiquitin). The span at 23 to 35 shows a compositional bias: basic and acidic residues; that stretch reads HTAEDRSLQHDRV. Over residues 220 to 233 the composition is skewed to low complexity; sequence AETATATETVTETE. TPR repeat units lie at residues 304 to 337, 338 to 371, 372 to 409, 410 to 447, 448 to 481, 482 to 515, and 516 to 549; these read PDPF…NTEH, AEAW…EPGN, LSAL…VVDQ, ARNQ…ANID, ADVQ…RPDD, ALLW…RPSF, and VRAR…HKVE.

The protein belongs to the peroxisomal targeting signal receptor family. Post-translationally, ubiquitination at Cys-10 is UBC4-independent but requires the presence of PEX4. Ubiquitination at Lys-22 is UBC4-dependent.

It localises to the cytoplasm. It is found in the peroxisome membrane. Binds to the C-terminal PTS1-type tripeptide peroxisomal targeting signal (SKL-type) and plays an essential role in peroxisomal protein import. The sequence is that of Peroxisomal targeting signal receptor (PAY32) from Yarrowia lipolytica (strain CLIB 122 / E 150) (Yeast).